Reading from the N-terminus, the 318-residue chain is NADH-quinone oxidoreductase subunit H 2 (318 aa).

9 helical membrane-spanning segments follow: residues 4–24, 77–97, 106–126, 146–166, 179–199, 214–234, 238–258, 262–282, and 293–313; these read LLIA…AGVF, LAPA…AFAP, VGVL…VLGA, LAYE…AGSF, LWFI…GLAA, LVAG…FLGE, ILLV…GPIL, IWFG…RAAL, and FAWK…AWIA.

It belongs to the complex I subunit 1 family. NDH-1 is composed of 14 different subunits. Subunits NuoA, H, J, K, L, M, N constitute the membrane sector of the complex.

It localises to the cell inner membrane. It carries out the reaction a quinone + NADH + 5 H(+)(in) = a quinol + NAD(+) + 4 H(+)(out). In terms of biological role, NDH-1 shuttles electrons from NADH, via FMN and iron-sulfur (Fe-S) centers, to quinones in the respiratory chain. The immediate electron acceptor for the enzyme in this species is believed to be ubiquinone. Couples the redox reaction to proton translocation (for every two electrons transferred, four hydrogen ions are translocated across the cytoplasmic membrane), and thus conserves the redox energy in a proton gradient. This subunit may bind ubiquinone. The protein is NADH-quinone oxidoreductase subunit H 2 of Cereibacter sphaeroides (strain ATCC 17023 / DSM 158 / JCM 6121 / CCUG 31486 / LMG 2827 / NBRC 12203 / NCIMB 8253 / ATH 2.4.1.) (Rhodobacter sphaeroides).